The chain runs to 361 residues: MQVLPDIKAPCDALASPSLEPYPQSSITVTLEDMGLWMKFHQIGTEMIITKSGRRMFPQCKIKVSGLIPYAKYLMLVDFVPVDNFRYKWNKDQWEVAGKAEPQLPCRTYVHPDSPAPGSHWMKEPVSFQKLKLTNNTLDQHGHIILHSMHRYKPRFHIVQADDLFSVRWSIFQVFSFPETVFTSVTAYQNEQITKLKIDNNPFAKGFREHGKNTRREGRAKSQKPSPAKGQKRKLPEEKESGAEERDFEKDENVDVKEESNPIVVSSGYPFWISEQNSSHAFPAASPAPAEQREGPAREQQVPTPSYQTYRFHEAGDSQQLPSRDVAALNDFRGRCHPLDLATVPEHDSKQLPEGFTNLPP.

Residues 36 to 209 constitute a DNA-binding region (T-box); it reads LWMKFHQIGT…NNPFAKGFRE (174 aa). Disordered stretches follow at residues 203–259 and 280–323; these read FAKG…VKEE and HAFP…QLPS. 2 stretches are compositionally biased toward basic and acidic residues: residues 206 to 220 and 234 to 259; these read GFRE…EGRA and KLPE…VKEE. Positions 280–290 are enriched in low complexity; the sequence is HAFPAASPAPA.

The protein localises to the nucleus. In terms of biological role, may be involved in regulating somitogenesis. This is T-box-containing protein TBX6L (TBX6L) from Gallus gallus (Chicken).